The following is a 126-amino-acid chain: MEKKIALIAHDKKKDDLVNFVKQNYLFLSKFKLIATGTTGSRIQQATDLTIIKYKSGPMGGDQQIGAEVAEGNVLAIFFFRDPLTNQPHEPDVSALIRLCDVHNIPLATNVKTAEILIKGFEGLNT.

The MGS-like domain maps to 1–126 (MEKKIALIAH…LIKGFEGLNT (126 aa)). Substrate contacts are provided by residues His-10, Lys-14, 36–39 (TGTT), and 56–57 (SG). Catalysis depends on Asp-62, which acts as the Proton donor/acceptor. His-89 lines the substrate pocket.

The protein belongs to the methylglyoxal synthase family.

It catalyses the reaction dihydroxyacetone phosphate = methylglyoxal + phosphate. Its function is as follows. Catalyzes the formation of methylglyoxal from dihydroxyacetone phosphate. In Borrelia garinii subsp. bavariensis (strain ATCC BAA-2496 / DSM 23469 / PBi) (Borreliella bavariensis), this protein is Methylglyoxal synthase.